The primary structure comprises 425 residues: uncharacterized protein (425 aa).

The 52-residue stretch at 2–53 folds into the F-box domain; it reads SFNLLDLPIVPRQKALKYLEPIDLFELSLCSKRMAQSVRDLKIEASAHFITL.

This is an uncharacterized protein from Caenorhabditis elegans.